The primary structure comprises 401 residues: S-adenosylmethionine synthase (401 aa).

Glycine 136 to aspartate 141 is a binding site for ATP. Residues glycine 278–serine 305 are disordered.

It belongs to the AdoMet synthase 2 family. Mg(2+) is required as a cofactor.

It carries out the reaction L-methionine + ATP + H2O = S-adenosyl-L-methionine + phosphate + diphosphate. It participates in amino-acid biosynthesis; S-adenosyl-L-methionine biosynthesis; S-adenosyl-L-methionine from L-methionine: step 1/1. Functionally, catalyzes the formation of S-adenosylmethionine from methionine and ATP. In Methanococcoides burtonii (strain DSM 6242 / NBRC 107633 / OCM 468 / ACE-M), this protein is S-adenosylmethionine synthase.